The primary structure comprises 369 residues: Anhydro-N-acetylmuramic acid kinase (369 aa).

12–19 (GTSLDGVD) provides a ligand contact to ATP.

The protein belongs to the anhydro-N-acetylmuramic acid kinase family.

The catalysed reaction is 1,6-anhydro-N-acetyl-beta-muramate + ATP + H2O = N-acetyl-D-muramate 6-phosphate + ADP + H(+). Its pathway is amino-sugar metabolism; 1,6-anhydro-N-acetylmuramate degradation. It functions in the pathway cell wall biogenesis; peptidoglycan recycling. Functionally, catalyzes the specific phosphorylation of 1,6-anhydro-N-acetylmuramic acid (anhMurNAc) with the simultaneous cleavage of the 1,6-anhydro ring, generating MurNAc-6-P. Is required for the utilization of anhMurNAc either imported from the medium or derived from its own cell wall murein, and thus plays a role in cell wall recycling. This chain is Anhydro-N-acetylmuramic acid kinase, found in Shigella flexneri.